A 210-amino-acid chain; its full sequence is UPF0502 protein Sama_1967 (210 aa).

This sequence belongs to the UPF0502 family.

The chain is UPF0502 protein Sama_1967 from Shewanella amazonensis (strain ATCC BAA-1098 / SB2B).